The sequence spans 185 residues: Elongation factor P (185 aa).

The protein belongs to the elongation factor P family.

It is found in the cytoplasm. It participates in protein biosynthesis; polypeptide chain elongation. Its function is as follows. Involved in peptide bond synthesis. Stimulates efficient translation and peptide-bond synthesis on native or reconstituted 70S ribosomes in vitro. Probably functions indirectly by altering the affinity of the ribosome for aminoacyl-tRNA, thus increasing their reactivity as acceptors for peptidyl transferase. This is Elongation factor P from Gloeothece citriformis (strain PCC 7424) (Cyanothece sp. (strain PCC 7424)).